Reading from the N-terminus, the 188-residue chain is Elongation factor P (188 aa).

Lys-34 carries the post-translational modification N6-(3,6-diaminohexanoyl)-5-hydroxylysine.

The protein belongs to the elongation factor P family. Post-translationally, may be beta-lysylated on the epsilon-amino group of Lys-34 by the combined action of EpmA and EpmB, and then hydroxylated on the C5 position of the same residue by EpmC (if this protein is present). Lysylation is critical for the stimulatory effect of EF-P on peptide-bond formation. The lysylation moiety may extend toward the peptidyltransferase center and stabilize the terminal 3-CCA end of the tRNA. Hydroxylation of the C5 position on Lys-34 may allow additional potential stabilizing hydrogen-bond interactions with the P-tRNA.

The protein localises to the cytoplasm. The protein operates within protein biosynthesis; polypeptide chain elongation. Its function is as follows. Involved in peptide bond synthesis. Alleviates ribosome stalling that occurs when 3 or more consecutive Pro residues or the sequence PPG is present in a protein, possibly by augmenting the peptidyl transferase activity of the ribosome. Modification of Lys-34 is required for alleviation. The chain is Elongation factor P from Xanthomonas campestris pv. campestris (strain B100).